Consider the following 52-residue polypeptide: MKFSTILLLVCPTVALSAQYALACTETGRNCQYSYECCSGACSAAFGFCLHR.

Positions 1–18 (MKFSTILLLVCPTVALSA) are cleaved as a signal peptide. 3 cysteine pairs are disulfide-bonded: C24–C38, C31–C42, and C37–C49.

It is found in the secreted. The sequence is that of Conotoxin-like peptide 2 (CTL-2) from Orgyia pseudotsugata (Douglas-fir tussock moth).